The following is a 255-amino-acid chain: tRNA (guanine-N(1)-)-methyltransferase (255 aa).

S-adenosyl-L-methionine is bound by residues Gly113 and 133–138 (IGDYVL).

This sequence belongs to the RNA methyltransferase TrmD family. Homodimer.

It localises to the cytoplasm. The catalysed reaction is guanosine(37) in tRNA + S-adenosyl-L-methionine = N(1)-methylguanosine(37) in tRNA + S-adenosyl-L-homocysteine + H(+). In terms of biological role, specifically methylates guanosine-37 in various tRNAs. The chain is tRNA (guanine-N(1)-)-methyltransferase from Shigella flexneri serotype 5b (strain 8401).